Here is a 1059-residue protein sequence, read N- to C-terminus: MEANPAGSGAGGGGSSGIGGEDGVHFQSYPFDFLEFLNHQRFEPMELYGEHAKAVAALPCAPGPPPQPPPQPPPPQYDYPPQSTFKPKAEVPSSSSSSSSSSSSSSSSSSSSSSSSSQAKKPDPPLPPAFGAPPPPLFDAAFPTPQWGIVDLSGHQHLFGNLKRGGPASGPGVTPGLGAPAGAPGPLPAPSQTPPGPPAAAACDPTKDDKGYFRRLKYLMERRFPCGVCQKSFKQSSHLVQHMLVHSGERPYECGVCGRTYNHVSSLIRHRRCHKDVPPAAGGPPQPGPHLPPLGLPAPAASAATAAAPSTVSSGPPATPVAPAPSADGSAAPAGVGVPPPATGGGDGPFACPLCWKVFKKPSHLHQHQIIHTGEKPFSCSVCSKSFNRRESLKRHVKTHSADLLRLPCGICGKAFRDASYLLKHQAAHAGAGAGGPRPVYPCDLCGKSYSAPQSLLRHKAAHAPPAAAAEAPKDGAASAPQPPPTFPPGPYLLPPDPPTTDSEKAAAAAAAVVYGAVPVPLLGAHPLLLGGAGTSGAGGSGASVPGKTFCCGICGRGFGRRETLKRHERIHTGEKPHQCPVCGKRFRESFHLSKHHVVHTRERPYKCELCGKVFGYPQSLTRHRQVHRLQLPCALAGAAGLPSTQGTPGACGPGASGTSAGPTDGLSYACSDCGEHFPDLFHVMSHKEVHMAEKPYGCDACGKTFGFIENLMWHKLVHQAAPERLLPPAPGGLQPPDGSSGTDAASVLDNGLAGEVGAAVAALAGVSGGEDAGGAAVAGAGGGASSGPERFSCATCGQSFKHFLGLVTHKYVHLVRRTLGCGLCGQSFAGAYDLLLHRRSHRQKRGFRCPVCGKRFWEAALLMRHQRCHTEQRPYRCGVCGRGFLRSWYLRQHRVVHTGERAFKCGVCAKRFAQSSSLAEHRRLHAVARPQRCSACGKTFRYRSNLLEHQRLHLGERAYRCEHCGKGFFYLSSVLRHQRAHEPPRPELRCPACLKAFKDPGYFRKHLAAHQGGRPFRCSSCGEGFANTYGLKKHRLAHKAENLGGPGAGAGTLAGKDA.

Disordered stretches follow at residues 1–24 (MEAN…EDGV), 58–142 (LPCA…DAAF), and 161–206 (NLKR…CDPT). Residues 8-21 (SGAGGGGSSGIGGE) show a composition bias toward gly residues. The span at 61–78 (APGPPPQPPPQPPPPQYD) shows a compositional bias: pro residues. The segment covering 93 to 119 (SSSSSSSSSSSSSSSSSSSSSSSSSQA) has biased composition (low complexity). 2 stretches are compositionally biased toward pro residues: residues 124–137 (PPLP…PPPL) and 183–198 (APGP…PGPP). C2H2-type zinc fingers lie at residues 224–246 (FPCG…MLVH) and 252–274 (YECG…RRCH). Residues 275–342 (KDVPPAAGGP…PAGVGVPPPA (68 aa)) form a disordered region. Positions 281 to 296 (AGGPPQPGPHLPPLGL) are enriched in pro residues. Composition is skewed to low complexity over residues 297–316 (PAPA…SSGP) and 324–337 (APSA…AGVG). 4 consecutive C2H2-type zinc fingers follow at residues 350-372 (FACP…QIIH), 378-400 (FSCS…VKTH), 407-429 (LPCG…QAAH), and 441-463 (YPCD…KAAH). The segment at 461–503 (AAHAPPAAAAEAPKDGAASAPQPPPTFPPGPYLLPPDPPTTDS) is disordered. A compositionally biased stretch (low complexity) spans 463 to 480 (HAPPAAAAEAPKDGAASA). Residues 481–499 (PQPPPTFPPGPYLLPPDPP) show a composition bias toward pro residues. 5 consecutive C2H2-type zinc fingers follow at residues 550–572 (FCCG…ERIH), 578–600 (HQCP…HVVH), 606–628 (YKCE…RQVH), 669–691 (YACS…KEVH), and 697–719 (YGCD…KLVH). The disordered stretch occupies residues 726-747 (LLPPAPGGLQPPDGSSGTDAAS). C2H2-type zinc fingers lie at residues 792 to 814 (FSCA…KYVH), 820 to 842 (LGCG…RRSH), 848 to 870 (FRCP…QRCH), 876 to 898 (YRCG…RVVH), 904 to 926 (FKCG…RRLH), 932 to 954 (QRCS…QRLH), 960 to 982 (YRCE…QRAH), 989 to 1011 (LRCP…LAAH), and 1017 to 1039 (FRCS…RLAH). Residue Lys-802 forms a Glycyl lysine isopeptide (Lys-Gly) (interchain with G-Cter in SUMO2) linkage. Residue Lys-1040 forms a Glycyl lysine isopeptide (Lys-Gly) (interchain with G-Cter in SUMO2) linkage.

It belongs to the krueppel C2H2-type zinc-finger protein family.

It is found in the nucleus. May be involved in transcriptional regulation. This chain is Zinc finger protein 865 (ZNF865), found in Homo sapiens (Human).